A 28-amino-acid chain; its full sequence is Apolipoprotein C-I (28 aa).

This sequence belongs to the apolipoprotein C1 family.

It is found in the secreted. Inhibitor of lipoprotein binding to the low density lipoprotein (LDL) receptor, LDL receptor-related protein, and very low density lipoprotein (VLDL) receptor. Associates with high density lipoproteins (HDL) and the triacylglycerol-rich lipoproteins in the plasma and makes up about 10% of the protein of the VLDL and 2% of that of HDL. Appears to interfere directly with fatty acid uptake and is also the major plasma inhibitor of cholesteryl ester transfer protein (CETP). Binds free fatty acids and reduces their intracellular esterification. Modulates the interaction of APOE with beta-migrating VLDL and inhibits binding of beta-VLDL to the LDL receptor-related protein. The sequence is that of Apolipoprotein C-I (APOC1) from Oryctolagus cuniculus (Rabbit).